The chain runs to 324 residues: D-alanine--D-alanine ligase (324 aa).

Positions 121–321 (NQYLKGFGIR…IKDVMTDIIE (201 aa)) constitute an ATP-grasp domain. ATP is bound at residue 149–204 (INKIGLPCFIKPNAGGSSFGVTKVKTKEDIQPAIEKAFEESDEVMIEAFMKGTEIT). Residues Asp275, Glu288, and Asn290 each coordinate Mg(2+).

The protein belongs to the D-alanine--D-alanine ligase family. Requires Mg(2+) as cofactor. It depends on Mn(2+) as a cofactor.

It localises to the cytoplasm. The enzyme catalyses 2 D-alanine + ATP = D-alanyl-D-alanine + ADP + phosphate + H(+). It participates in cell wall biogenesis; peptidoglycan biosynthesis. Functionally, cell wall formation. This Phocaeicola vulgatus (strain ATCC 8482 / DSM 1447 / JCM 5826 / CCUG 4940 / NBRC 14291 / NCTC 11154) (Bacteroides vulgatus) protein is D-alanine--D-alanine ligase.